The sequence spans 40 residues: uncharacterized protein (40 aa).

The first 17 residues, 1-17 (MAVAALAMYGGTCGACA), serve as a signal peptide directing secretion.

This is an uncharacterized protein from Archaeoglobus fulgidus (strain ATCC 49558 / DSM 4304 / JCM 9628 / NBRC 100126 / VC-16).